The following is a 657-amino-acid chain: WD repeat-containing protein 70 (657 aa).

Disordered stretches follow at residues 1–21 (MEHS…DPQL) and 43–172 (FEQT…PVQR). Positions 45–78 (QTRRTAVERSRKTLEAREKEEEMNREKELRKQIE) are enriched in basic and acidic residues. The span at 82 to 105 (PAPSSSSAARERSQSSCRDTSSSD) shows a compositional bias: low complexity. Acidic residues-rich tracts occupy residues 106 to 119 (SESD…DDEL) and 150 to 168 (EEGE…EEDN). WD repeat units follow at residues 183 to 222 (HGTK…ASFK), 230 to 271 (CECH…ECIK), 284 to 324 (GHTA…KQKS), 333 to 372 (GKKV…HPKF), 379 to 418 (DPGT…KPLF), 424 to 469 (PTLF…RVYE), and 472 to 511 (ITDA…QRGA). K299 is covalently cross-linked (Glycyl lysine isopeptide (Lys-Gly) (interchain with G-Cter in SUMO2)). K455 is modified (N6-acetyllysine). The span at 543 to 568 (REPRQRSTRKQLEKDRLDPLKSHKPE) shows a compositional bias: basic and acidic residues. The disordered stretch occupies residues 543–584 (REPRQRSTRKQLEKDRLDPLKSHKPEPPVAGPGRGGRVGTHG). Residues 574–584 (PGRGGRVGTHG) are compositionally biased toward gly residues. T582 carries the post-translational modification Phosphothreonine. Residues K593 and K599 each participate in a glycyl lysine isopeptide (Lys-Gly) (interchain with G-Cter in SUMO2) cross-link. S624 and S641 each carry phosphoserine. Residues 634 to 657 (TMFAQVESDDEESKNEPEWKKRKI) are disordered. The segment covering 647 to 657 (KNEPEWKKRKI) has biased composition (basic and acidic residues).

The protein belongs to the WD repeat GAD-1 family.

The chain is WD repeat-containing protein 70 (Wdr70) from Mus musculus (Mouse).